The primary structure comprises 338 residues: 4-hydroxy-2-oxovalerate aldolase (338 aa).

The 251-residue stretch at 4-254 (PRLTDTTLRD…NPGLDVLALM (251 aa)) folds into the Pyruvate carboxyltransferase domain. 12–13 (RD) lines the substrate pocket. D13 contributes to the Mn(2+) binding site. The active-site Proton acceptor is the H16. The substrate site is built by S166 and H193. The Mn(2+) site is built by H193 and H195. Y284 contributes to the substrate binding site.

The protein belongs to the 4-hydroxy-2-oxovalerate aldolase family.

It catalyses the reaction (S)-4-hydroxy-2-oxopentanoate = acetaldehyde + pyruvate. The polypeptide is 4-hydroxy-2-oxovalerate aldolase (Roseiflexus sp. (strain RS-1)).